Here is a 758-residue protein sequence, read N- to C-terminus: Xaa-Pro dipeptidyl-peptidase (758 aa).

Catalysis depends on charge relay system residues S349, D469, and H499.

The protein belongs to the peptidase S15 family. As to quaternary structure, homodimer.

It localises to the cytoplasm. It carries out the reaction Hydrolyzes Xaa-Pro-|- bonds to release unblocked, N-terminal dipeptides from substrates including Ala-Pro-|-p-nitroanilide and (sequentially) Tyr-Pro-|-Phe-Pro-|-Gly-Pro-|-Ile.. Its function is as follows. Removes N-terminal dipeptides sequentially from polypeptides having unsubstituted N-termini provided that the penultimate residue is proline. The protein is Xaa-Pro dipeptidyl-peptidase of Streptococcus uberis (strain ATCC BAA-854 / 0140J).